Here is a 386-residue protein sequence, read N- to C-terminus: Patatin group M-1 (386 aa).

An N-terminal signal peptide occupies residues 1–23 (MATTKSFLILFFMILATTSSTCA). The region spanning 32–229 (LSIDGGGIKG…TVGDPALLSL (198 aa)) is the PNPLA domain. The GXGXXG motif lies at 36-41 (GGGIKG). Residues 75–79 (GTSTG) carry the GXSXG motif. Catalysis depends on S77, which acts as the Nucleophile. A glycan (N-linked (GlcNAc...) asparagine) is linked at N115. D215 serves as the catalytic Proton acceptor. A DGA/G motif is present at residues 215–217 (DGG).

The protein belongs to the patatin family. As to expression, tuber.

Its subcellular location is the vacuole. Probable lipolytic acyl hydrolase (LAH), an activity which is thought to be involved in the response of tubers to pathogens. The sequence is that of Patatin group M-1 from Solanum tuberosum (Potato).